Reading from the N-terminus, the 490-residue chain is Cytochrome P450 2C6 (490 aa).

Lys-249 and Lys-375 each carry N6-acetyllysine. Cys-435 is a binding site for heme.

This sequence belongs to the cytochrome P450 family. Heme is required as a cofactor.

The protein resides in the endoplasmic reticulum membrane. It localises to the microsome membrane. The enzyme catalyses an organic molecule + reduced [NADPH--hemoprotein reductase] + O2 = an alcohol + oxidized [NADPH--hemoprotein reductase] + H2O + H(+). Cytochromes P450 are a group of heme-thiolate monooxygenases. In liver microsomes, this enzyme is involved in an NADPH-dependent electron transport pathway. It oxidizes a variety of structurally unrelated compounds, including steroids, fatty acids, and xenobiotics. In Rattus norvegicus (Rat), this protein is Cytochrome P450 2C6 (Cyp2c6).